A 159-amino-acid chain; its full sequence is Serine-protein kinase RsbW (159 aa).

The protein belongs to the anti-sigma-factor family.

It carries out the reaction L-seryl-[protein] + ATP = O-phospho-L-seryl-[protein] + ADP + H(+). The enzyme catalyses L-threonyl-[protein] + ATP = O-phospho-L-threonyl-[protein] + ADP + H(+). Its function is as follows. Negative regulator of sigma-B activity. Phosphorylates and inactivates its specific antagonist protein, RsbV. Upon phosphorylation of RsbV, RsbW is released and binds to sigma-B, thereby blocking its ability to form an RNA polymerase holoenzyme (E-sigma-B). This is Serine-protein kinase RsbW from Staphylococcus epidermidis.